The sequence spans 980 residues: NACHT, LRR and PYD domains-containing protein 7 (980 aa).

One can recognise a Pyrin domain in the interval Met-1–Glu-93. The interval Glu-104–Trp-123 is disordered. The segment covering Glu-113–Trp-123 has biased composition (basic and acidic residues). Residues Tyr-172–Asp-491 form the NACHT domain. Residue Gly-178 to Thr-185 participates in ATP binding. 9 LRR repeats span residues Cys-614–Leu-638, Asn-674–Asp-697, Lys-760–Val-784, Asn-788–Tyr-810, Lys-817–Ala-840, Ser-845–Glu-868, Asp-874–Glu-897, Ala-902–Asn-928, and Leu-933–Lys-957.

The protein belongs to the NLRP family. As to quaternary structure, directly interacts with CASP1 and IL1B. Expressed in numerous tissues including uterus and ovary, with low levels in heart and brain. Not detected in skeletal muscle.

Its function is as follows. Inhibits CASP1/caspase-1-dependent IL1B secretion. The chain is NACHT, LRR and PYD domains-containing protein 7 (NLRP7) from Homo sapiens (Human).